The following is a 381-amino-acid chain: Homoserine O-succinyltransferase (381 aa).

Residues 45–360 form the AB hydrolase-1 domain; the sequence is NAVLVCHALN…PHGHDAFLLD (316 aa). Ser151 acts as the Nucleophile in catalysis. Arg221 is a binding site for substrate. Active-site residues include Asp321 and His354. Asp355 contacts substrate.

This sequence belongs to the AB hydrolase superfamily. MetX family. In terms of assembly, homodimer.

It localises to the cytoplasm. The enzyme catalyses L-homoserine + succinyl-CoA = O-succinyl-L-homoserine + CoA. It participates in amino-acid biosynthesis; L-methionine biosynthesis via de novo pathway; O-succinyl-L-homoserine from L-homoserine: step 1/1. Transfers a succinyl group from succinyl-CoA to L-homoserine, forming succinyl-L-homoserine. This Burkholderia mallei (strain NCTC 10247) protein is Homoserine O-succinyltransferase.